The sequence spans 203 residues: Pyridoxal 5'-phosphate synthase subunit PdxT (203 aa).

Glycine 52–serine 54 contributes to the L-glutamine binding site. Cysteine 84 (nucleophile) is an active-site residue. L-glutamine is bound by residues arginine 116 and isoleucine 144–arginine 145. Active-site charge relay system residues include histidine 184 and glutamate 186.

It belongs to the glutaminase PdxT/SNO family. In the presence of PdxS, forms a dodecamer of heterodimers. Only shows activity in the heterodimer.

The enzyme catalyses aldehydo-D-ribose 5-phosphate + D-glyceraldehyde 3-phosphate + L-glutamine = pyridoxal 5'-phosphate + L-glutamate + phosphate + 3 H2O + H(+). The catalysed reaction is L-glutamine + H2O = L-glutamate + NH4(+). Its pathway is cofactor biosynthesis; pyridoxal 5'-phosphate biosynthesis. Functionally, catalyzes the hydrolysis of glutamine to glutamate and ammonia as part of the biosynthesis of pyridoxal 5'-phosphate. The resulting ammonia molecule is channeled to the active site of PdxS. This chain is Pyridoxal 5'-phosphate synthase subunit PdxT, found in Aeropyrum pernix (strain ATCC 700893 / DSM 11879 / JCM 9820 / NBRC 100138 / K1).